Reading from the N-terminus, the 443-residue chain is Tol-Pal system protein TolB (443 aa).

Positions 1–33 (MKIGIINTKIRTVFSAFACMIAASLVCTMPARA) are cleaved as a signal peptide.

Belongs to the TolB family. The Tol-Pal system is composed of five core proteins: the inner membrane proteins TolA, TolQ and TolR, the periplasmic protein TolB and the outer membrane protein Pal. They form a network linking the inner and outer membranes and the peptidoglycan layer.

Its subcellular location is the periplasm. In terms of biological role, part of the Tol-Pal system, which plays a role in outer membrane invagination during cell division and is important for maintaining outer membrane integrity. The protein is Tol-Pal system protein TolB of Brucella canis (strain ATCC 23365 / NCTC 10854 / RM-666).